We begin with the raw amino-acid sequence, 505 residues long: Lysine--tRNA ligase (505 aa).

Residues Glu-415 and Glu-422 each coordinate Mg(2+).

It belongs to the class-II aminoacyl-tRNA synthetase family. In terms of assembly, homodimer. It depends on Mg(2+) as a cofactor.

The protein localises to the cytoplasm. The catalysed reaction is tRNA(Lys) + L-lysine + ATP = L-lysyl-tRNA(Lys) + AMP + diphosphate. This chain is Lysine--tRNA ligase, found in Xanthomonas campestris pv. campestris (strain 8004).